The sequence spans 309 residues: Methionyl-tRNA formyltransferase (309 aa).

(6S)-5,6,7,8-tetrahydrofolate is bound at residue 109–112 (SLLP).

The protein belongs to the Fmt family.

The catalysed reaction is L-methionyl-tRNA(fMet) + (6R)-10-formyltetrahydrofolate = N-formyl-L-methionyl-tRNA(fMet) + (6S)-5,6,7,8-tetrahydrofolate + H(+). Attaches a formyl group to the free amino group of methionyl-tRNA(fMet). The formyl group appears to play a dual role in the initiator identity of N-formylmethionyl-tRNA by promoting its recognition by IF2 and preventing the misappropriation of this tRNA by the elongation apparatus. This chain is Methionyl-tRNA formyltransferase, found in Clostridium botulinum (strain Alaska E43 / Type E3).